Reading from the N-terminus, the 201-residue chain is Recombination protein RecR (201 aa).

A C4-type zinc finger spans residues 57–72; it reads CADCRTFTEQDICTIC. The Toprim domain maps to 81-176; sequence GQICVVESPA…VASRIAHGVP (96 aa).

It belongs to the RecR family.

In terms of biological role, may play a role in DNA repair. It seems to be involved in an RecBC-independent recombinational process of DNA repair. It may act with RecF and RecO. In Serratia proteamaculans (strain 568), this protein is Recombination protein RecR.